A 129-amino-acid polypeptide reads, in one-letter code: Small ribosomal subunit protein uS11 (129 aa).

The protein belongs to the universal ribosomal protein uS11 family. Part of the 30S ribosomal subunit. Interacts with proteins S7 and S18. Binds to IF-3.

In terms of biological role, located on the platform of the 30S subunit, it bridges several disparate RNA helices of the 16S rRNA. Forms part of the Shine-Dalgarno cleft in the 70S ribosome. In Thermosipho africanus (strain TCF52B), this protein is Small ribosomal subunit protein uS11.